The primary structure comprises 80 residues: Lantibiotic Flvalpha.a (80 aa).

The propeptide at 1–38 (MNKNPIYRSEEEAKDIACGNVAAELDENSQALDAINGA) is cleaved by FlvT. 2,3-didehydrobutyrine; by FlvM1 occurs at positions 43 and 47. Positions 52-55 (TVGC) form a cross-link, beta-methyllanthionine (Thr-Cys); by FlvM1. The lanthionine (Ser-Cys); by FlvM1 cross-link spans 58–68 (SYGLGNGGYCC). 2 cross-links (beta-methyllanthionine (Thr-Cys); by FlvM1) span residues 69–74 (TYTVEC) and 71–78 (TVECSKTC).

The lanthionine formed by Ser-58 and Cys-68 forms a putative lipid II binding motif. Post-translationally, maturation of FlvA1 peptides involves the enzymatic conversion of Thr, and Ser into dehydrated AA and the formation of thioether bonds with cysteines. Modifications are processed by the flavecin synthetase FlvM1. This is followed by membrane translocation and cleavage of the modified precursor. In terms of processing, contains DL-lanthionine and DL-beta-methyllanthionine, when coepressed in E.coli with the flavecin synthetase FlvM1.

The protein localises to the secreted. Lanthionine-containing peptide antibiotic (lantibiotic) only active on Gram-positive bacteria in synergy with Flvbeta peptides, which are encoded by the same operon than Flvalpha.a. Shows antibacterial activity in synergy with Flvbeta.b, Flvbeta.c, Flvbeta.e and Flvbeta.g. Does not show antibacterial activity when tested with Flvbeta.a, Flvbeta.d, Flvbeta.f and Flvbeta.h. The bactericidal activity of lantibiotics is based on depolarization of energized bacterial cytoplasmic membranes, initiated by the formation of aqueous transmembrane pores. This Ruminococcus flavefaciens protein is Lantibiotic Flvalpha.a.